The chain runs to 272 residues: Putative phosphoenolpyruvate synthase regulatory protein (272 aa).

An ADP-binding site is contributed by 152–159; the sequence is GVSRCGKT.

This sequence belongs to the pyruvate, phosphate/water dikinase regulatory protein family. PSRP subfamily.

The enzyme catalyses [pyruvate, water dikinase] + ADP = [pyruvate, water dikinase]-phosphate + AMP + H(+). It carries out the reaction [pyruvate, water dikinase]-phosphate + phosphate + H(+) = [pyruvate, water dikinase] + diphosphate. Bifunctional serine/threonine kinase and phosphorylase involved in the regulation of the phosphoenolpyruvate synthase (PEPS) by catalyzing its phosphorylation/dephosphorylation. The protein is Putative phosphoenolpyruvate synthase regulatory protein of Pseudomonas putida (strain GB-1).